The following is a 298-amino-acid chain: Bifunctional protein FolD (298 aa).

NADP(+) contacts are provided by residues 166 to 168, Ser195, and Ile236; that span reads GRS.

The protein belongs to the tetrahydrofolate dehydrogenase/cyclohydrolase family. In terms of assembly, homodimer.

The catalysed reaction is (6R)-5,10-methylene-5,6,7,8-tetrahydrofolate + NADP(+) = (6R)-5,10-methenyltetrahydrofolate + NADPH. It catalyses the reaction (6R)-5,10-methenyltetrahydrofolate + H2O = (6R)-10-formyltetrahydrofolate + H(+). The protein operates within one-carbon metabolism; tetrahydrofolate interconversion. Functionally, catalyzes the oxidation of 5,10-methylenetetrahydrofolate to 5,10-methenyltetrahydrofolate and then the hydrolysis of 5,10-methenyltetrahydrofolate to 10-formyltetrahydrofolate. This chain is Bifunctional protein FolD, found in Chlorobium phaeobacteroides (strain BS1).